Here is a 121-residue protein sequence, read N- to C-terminus: Pro-glucagon (121 aa).

A signal peptide spans 1–21 (MKGAQYLAGLLLLLFVQNSIC). Residues 80–85 (SNGGSA) constitute a propeptide that is removed on maturation.

This sequence belongs to the glucagon family.

The protein resides in the secreted. In terms of biological role, plays a key role in glucose metabolism and homeostasis. Regulates blood glucose by increasing gluconeogenesis and decreasing glycolysis. This Carassius auratus (Goldfish) protein is Pro-glucagon (gcg).